Reading from the N-terminus, the 160-residue chain is Troponin C, skeletal muscle (160 aa).

An N-acetylthreonine modification is found at T2. 4 consecutive EF-hand domains span residues 15-50 (EMIAEFKAAFDMFDADGGGDISVKELGTVMRMLGQT), 51-86 (PTKEELDAIIEEVDEDGSGTIDFEEFLVMMVRQMKE), 91-126 (KSEEELAECFRIFDRNADGYIDAEELAEIFRASGEH), and 127-160 (VTDEEIESLMKDGDKNNDGRIDFDEFLKMMEGVQ). 19 residues coordinate Ca(2+): D28, D30, D34, E39, D64, D66, S68, T70, E75, D104, N106, D108, Y110, E115, D140, N142, D144, R146, and E151.

Belongs to the troponin C family.

Functionally, troponin is the central regulatory protein of striated muscle contraction. Tn consists of three components: Tn-I which is the inhibitor of actomyosin ATPase, Tn-T which contains the binding site for tropomyosin and Tn-C. The binding of calcium to Tn-C abolishes the inhibitory action of Tn on actin filaments. The polypeptide is Troponin C, skeletal muscle (TNNC2) (Oryctolagus cuniculus (Rabbit)).